Reading from the N-terminus, the 354-residue chain is Opsin-1, short-wave-sensitive 2 (354 aa).

Over 1 to 43 the chain is Extracellular; the sequence is MKQQQQTPELFEDFHMPITLDVSNISAYSPFLVPQDHLGHSGV. N24 carries N-linked (GlcNAc...) asparagine glycosylation. A helical transmembrane segment spans residues 44–68; it reads FMGMSAFMLFLFIAGTAINVLTIVC. The Cytoplasmic segment spans residues 69–80; that stretch reads TIQYKKLRSHLN. The chain crosses the membrane as a helical span at residues 81–106; it reads YILVNLAISNLWVSVFGSSVAFYAFY. The Extracellular portion of the chain corresponds to 107–120; it reads KKYFVFGPIGCKIE. Residues C117 and C194 are joined by a disulfide bond. The helical transmembrane segment at 121–140 threads the bilayer; that stretch reads GFTSTIGGMVSLWSLAVVAL. At 141–159 the chain is on the cytoplasmic side; that stretch reads ERWLVICKPLGNFTFKTPH. The helical transmembrane segment at 160 to 183 threads the bilayer; it reads AIAGCILPWCMALAAGLPPLLGWS. Over 184-209 the chain is Extracellular; that stretch reads RYIPEGLQCSCGPDWYTTNNKFNNES. N-linked (GlcNAc...) asparagine glycosylation is present at N207. A helical transmembrane segment spans residues 210–237; sequence YVMFLFCFCFAVPFSTIVFCYGQLLITL. At 238–259 the chain is on the cytoplasmic side; the sequence is KLAAKAQADSASTQKAEREVTK. A helical transmembrane segment spans residues 260–283; it reads MVVVMVFGFLICWGPYAIFAIWVV. Residues 284 to 291 lie on the Extracellular side of the membrane; sequence SNRGAPFD. The helical transmembrane segment at 292-316 threads the bilayer; that stretch reads LRLATIPSCLCKASTVYNPVIYVLM. Position 303 is an N6-(retinylidene)lysine (K303). Residues 317 to 354 lie on the Cytoplasmic side of the membrane; the sequence is NKQFRSCMMKMVFNKNIEEDEASSSSQVTQVSSVAPEK.

Belongs to the G-protein coupled receptor 1 family. Opsin subfamily. Post-translationally, phosphorylated on some or all of the serine and threonine residues present in the C-terminal region. Retinal long single cone outer segments.

The protein localises to the membrane. In terms of biological role, visual pigments are the light-absorbing molecules that mediate vision. They consist of an apoprotein, opsin, covalently linked to cis-retinal. The polypeptide is Opsin-1, short-wave-sensitive 2 (opn1sw2) (Danio rerio (Zebrafish)).